The primary structure comprises 98 residues: Protein E7 (98 aa).

Residues 1–37 (MKGQNVTLQDIAIELEDTISPINLHCEEEIETEEVDT) form an E7 terminal domain region. An LXCXE motif; interaction with host RB1 and TMEM173/STING motif is present at residues 24–28 (LHCEE). Residues 47-83 (CYACEQVLRLAVVTSTEGIHQLQQLLFDNLFLLCAAC) fold into a zinc finger. The Nuclear export signal motif lies at 65 to 73 (IHQLQQLLF).

Belongs to the papillomaviridae E7 protein family. Homodimer. Homooligomer. Interacts with host RB1; this interaction induces dissociation of RB1-E2F1 complex thereby disrupting RB1 activity. Interacts with host EP300; this interaction represses EP300 transcriptional activity. Interacts with protein E2; this interaction inhibits E7 oncogenic activity. Interacts with host TMEM173/STING; this interaction impairs the ability of TMEM173/STING to sense cytosolic DNA and promote the production of type I interferon (IFN-alpha and IFN-beta). Post-translationally, highly phosphorylated.

It localises to the host cytoplasm. The protein localises to the host nucleus. Its function is as follows. Plays a role in viral genome replication by driving entry of quiescent cells into the cell cycle. Stimulation of progression from G1 to S phase allows the virus to efficiently use the cellular DNA replicating machinery to achieve viral genome replication. E7 protein has both transforming and trans-activating activities. Induces the disassembly of the E2F1 transcription factor from RB1, with subsequent transcriptional activation of E2F1-regulated S-phase genes. Interferes with host histone deacetylation mediated by HDAC1 and HDAC2, leading to transcription activation. Also plays a role in the inhibition of both antiviral and antiproliferative functions of host interferon alpha. Interaction with host TMEM173/STING impairs the ability of TMEM173/STING to sense cytosolic DNA and promote the production of type I interferon (IFN-alpha and IFN-beta). This is Protein E7 from Bos taurus papillomavirus 4 (Bovine papillomavirus 4).